We begin with the raw amino-acid sequence, 535 residues long: GMP synthase [glutamine-hydrolyzing] (535 aa).

One can recognise a Glutamine amidotransferase type-1 domain in the interval Leu21–Thr211. Catalysis depends on Cys98, which acts as the Nucleophile. Catalysis depends on residues His185 and Glu187. One can recognise a GMPS ATP-PPase domain in the interval Trp212–Arg410. Ser239–Ser245 is an ATP binding site.

As to quaternary structure, homodimer.

It carries out the reaction XMP + L-glutamine + ATP + H2O = GMP + L-glutamate + AMP + diphosphate + 2 H(+). The protein operates within purine metabolism; GMP biosynthesis; GMP from XMP (L-Gln route): step 1/1. Its function is as follows. Catalyzes the synthesis of GMP from XMP. This Thermosynechococcus vestitus (strain NIES-2133 / IAM M-273 / BP-1) protein is GMP synthase [glutamine-hydrolyzing].